A 303-amino-acid polypeptide reads, in one-letter code: WD repeat-containing protein 38 (303 aa).

7 WD repeats span residues 24–63 (QHHG…LLWR), 66–105 (GHRG…CLHV), 108–147 (GHQR…RVHL), 150–189 (GHCD…PVVS), 195–233 (GHTG…LPLQ), 236–277 (GHTI…ETLK), and 279–303 (MLDV…AVTR).

In Mus musculus (Mouse), this protein is WD repeat-containing protein 38 (Wdr38).